The sequence spans 79 residues: D-alanyl carrier protein (79 aa).

Positions 1–77 (MDIKAEVIEI…KIVEGVTELR (77 aa)) constitute a Carrier domain. An O-(pantetheine 4'-phosphoryl)serine modification is found at Ser-35.

It belongs to the DltC family. In terms of processing, 4'-phosphopantetheine is transferred from CoA to a specific serine of apo-DCP.

The protein localises to the cytoplasm. It functions in the pathway cell wall biogenesis; lipoteichoic acid biosynthesis. Functionally, carrier protein involved in the D-alanylation of lipoteichoic acid (LTA). The loading of thioester-linked D-alanine onto DltC is catalyzed by D-alanine--D-alanyl carrier protein ligase DltA. The DltC-carried D-alanyl group is further transferred to cell membrane phosphatidylglycerol (PG) by forming an ester bond, probably catalyzed by DltD. D-alanylation of LTA plays an important role in modulating the properties of the cell wall in Gram-positive bacteria, influencing the net charge of the cell wall. This is D-alanyl carrier protein from Streptococcus sanguinis (strain SK36).